A 31-amino-acid chain; its full sequence is Cytochrome b6-f complex subunit 6 (31 aa).

The helical transmembrane segment at 5–25 (ISYLGILVGALLFVTITFLTL) threads the bilayer.

Belongs to the PetL family. The 4 large subunits of the cytochrome b6-f complex are cytochrome b6, subunit IV (17 kDa polypeptide, PetD), cytochrome f and the Rieske protein, while the 4 small subunits are PetG, PetL, PetM and PetN. The complex functions as a dimer.

Its subcellular location is the plastid. It is found in the chloroplast thylakoid membrane. Functionally, component of the cytochrome b6-f complex, which mediates electron transfer between photosystem II (PSII) and photosystem I (PSI), cyclic electron flow around PSI, and state transitions. PetL is important for photoautotrophic growth as well as for electron transfer efficiency and stability of the cytochrome b6-f complex. The polypeptide is Cytochrome b6-f complex subunit 6 (Chlorokybus atmophyticus (Soil alga)).